A 342-amino-acid polypeptide reads, in one-letter code: Anthranilate phosphoribosyltransferase (342 aa).

Residues Gly-90, 93–94, Thr-98, 100–103, 118–126, and Ser-130 each bind 5-phospho-alpha-D-ribose 1-diphosphate; these read GS, NIST, and KHGNRRATS. Gly-90 lines the anthranilate pocket. Ser-102 provides a ligand contact to Mg(2+). Asn-121 serves as a coordination point for anthranilate. Arg-176 serves as a coordination point for anthranilate. Residues Asp-235 and Glu-236 each contribute to the Mg(2+) site.

The protein belongs to the anthranilate phosphoribosyltransferase family. As to quaternary structure, homodimer. Requires Mg(2+) as cofactor.

It catalyses the reaction N-(5-phospho-beta-D-ribosyl)anthranilate + diphosphate = 5-phospho-alpha-D-ribose 1-diphosphate + anthranilate. It functions in the pathway amino-acid biosynthesis; L-tryptophan biosynthesis; L-tryptophan from chorismate: step 2/5. Its function is as follows. Catalyzes the transfer of the phosphoribosyl group of 5-phosphorylribose-1-pyrophosphate (PRPP) to anthranilate to yield N-(5'-phosphoribosyl)-anthranilate (PRA). This Rhodopirellula baltica (strain DSM 10527 / NCIMB 13988 / SH1) protein is Anthranilate phosphoribosyltransferase.